Consider the following 645-residue polypeptide: Glucans biosynthesis glucosyltransferase H (645 aa).

The interval M1–P28 is disordered. 7 helical membrane-spanning segments follow: residues L64–W84, L98–I118, A423–I443, A465–I485, A504–L524, S558–P578, and L580–V600.

Belongs to the glycosyltransferase 2 family. OpgH subfamily.

It localises to the cell inner membrane. The protein operates within glycan metabolism; osmoregulated periplasmic glucan (OPG) biosynthesis. In terms of biological role, involved in the biosynthesis of osmoregulated periplasmic glucans (OPGs). The chain is Glucans biosynthesis glucosyltransferase H from Xanthomonas campestris pv. campestris (strain 8004).